Reading from the N-terminus, the 129-residue chain is Glycine cleavage system H protein 2 (129 aa).

The 82-residue stretch at 24-105 (SVTVGISDHA…PYVSWFFKLK (82 aa)) folds into the Lipoyl-binding domain. Lys65 carries the N6-lipoyllysine modification.

This sequence belongs to the GcvH family. As to quaternary structure, the glycine cleavage system is composed of four proteins: P, T, L and H. (R)-lipoate is required as a cofactor.

The glycine cleavage system catalyzes the degradation of glycine. The H protein shuttles the methylamine group of glycine from the P protein to the T protein. The sequence is that of Glycine cleavage system H protein 2 from Pseudomonas aeruginosa (strain ATCC 15692 / DSM 22644 / CIP 104116 / JCM 14847 / LMG 12228 / 1C / PRS 101 / PAO1).